Consider the following 1079-residue polypeptide: Integrator complex subunit 3 homolog (1079 aa).

3 disordered regions span residues 539–574 (ESSERETEAVFSDDDGENIARCNKNDENTDDDDDLP), 925–949 (YPSSSPNKRKRPSKGSSAASSTPSA), and 1010–1079 (AVGR…NDSD). Positions 938 to 949 (KGSSAASSTPSA) are enriched in low complexity. 4 positions are modified to phosphoserine: S1049, S1050, S1054, and S1055. A compositionally biased stretch (basic residues) spans 1062-1073 (HKITQAAKKRKK).

This sequence belongs to the Integrator subunit 3 family. In terms of assembly, belongs to the multiprotein complex Integrator, at least composed of IntS1, IntS2, IntS3, IntS4, omd/IntS5, IntS6, defl/IntS7, IntS8, IntS9, IntS10, IntS11, IntS12, asun/IntS13, IntS14 and IntS15. The core complex associates with protein phosphatase 2A subunits mts/PP2A and Pp2A-29B, to form the Integrator-PP2A (INTAC) complex.

The protein localises to the nucleus. It localises to the cytoplasm. Component of the integrator complex, a multiprotein complex that terminates RNA polymerase II (Pol II) transcription in the promoter-proximal region of genes. The integrator complex provides a quality checkpoint during transcription elongation by driving premature transcription termination of transcripts that are unfavorably configured for transcriptional elongation: the complex terminates transcription by (1) catalyzing dephosphorylation of the C-terminal domain (CTD) of Pol II subunit Polr2A/Rbp1 and Spt5, and (2) degrading the exiting nascent RNA transcript via endonuclease activity. The integrator complex is also involved in the 3'-end processing of the U7 snRNA, and also the spliceosomal snRNAs U1, U2, U4 and U5. The chain is Integrator complex subunit 3 homolog (IntS3) from Drosophila virilis (Fruit fly).